The following is a 190-amino-acid chain: Segregation and condensation protein B (190 aa).

This sequence belongs to the ScpB family. In terms of assembly, homodimer. Homodimerization may be required to stabilize the binding of ScpA to the Smc head domains. Component of a cohesin-like complex composed of ScpA, ScpB and the Smc homodimer, in which ScpA and ScpB bind to the head domain of Smc. The presence of the three proteins is required for the association of the complex with DNA.

It is found in the cytoplasm. In terms of biological role, participates in chromosomal partition during cell division. May act via the formation of a condensin-like complex containing Smc and ScpA that pull DNA away from mid-cell into both cell halves. The chain is Segregation and condensation protein B from Bacillus cereus (strain ATCC 10987 / NRS 248).